Consider the following 244-residue polypeptide: Phosphatidylserine decarboxylase proenzyme (244 aa).

The Schiff-base intermediate with substrate; via pyruvic acid role is filled by Ser212. The residue at position 212 (Ser212) is a Pyruvic acid (Ser); by autocatalysis.

This sequence belongs to the phosphatidylserine decarboxylase family. PSD-A subfamily. Heterodimer of a large membrane-associated beta subunit and a small pyruvoyl-containing alpha subunit. Pyruvate is required as a cofactor. Post-translationally, is synthesized initially as an inactive proenzyme. Formation of the active enzyme involves a self-maturation process in which the active site pyruvoyl group is generated from an internal serine residue via an autocatalytic post-translational modification. Two non-identical subunits are generated from the proenzyme in this reaction, and the pyruvate is formed at the N-terminus of the alpha chain, which is derived from the carboxyl end of the proenzyme. The post-translation cleavage follows an unusual pathway, termed non-hydrolytic serinolysis, in which the side chain hydroxyl group of the serine supplies its oxygen atom to form the C-terminus of the beta chain, while the remainder of the serine residue undergoes an oxidative deamination to produce ammonia and the pyruvoyl prosthetic group on the alpha chain.

It is found in the cell membrane. It carries out the reaction a 1,2-diacyl-sn-glycero-3-phospho-L-serine + H(+) = a 1,2-diacyl-sn-glycero-3-phosphoethanolamine + CO2. The protein operates within phospholipid metabolism; phosphatidylethanolamine biosynthesis; phosphatidylethanolamine from CDP-diacylglycerol: step 2/2. Its function is as follows. Catalyzes the formation of phosphatidylethanolamine (PtdEtn) from phosphatidylserine (PtdSer). The sequence is that of Phosphatidylserine decarboxylase proenzyme from Granulibacter bethesdensis (strain ATCC BAA-1260 / CGDNIH1).